The sequence spans 98 residues: Integration host factor subunit alpha (98 aa).

Positions 49–71 (FGNFDLRDKNQRPGRNPKTGEDI) are disordered.

Belongs to the bacterial histone-like protein family. In terms of assembly, heterodimer of an alpha and a beta chain.

This protein is one of the two subunits of integration host factor, a specific DNA-binding protein that functions in genetic recombination as well as in transcriptional and translational control. The protein is Integration host factor subunit alpha of Shewanella oneidensis (strain ATCC 700550 / JCM 31522 / CIP 106686 / LMG 19005 / NCIMB 14063 / MR-1).